The chain runs to 293 residues: MQFAKGHGTQNDFVLLPDLDARLALTPAVVSALCDRRRGLGADGVLRVTTAKAALSAGVFERLPEGVGAGDWYMDYRNADGSIAQMCGNGVRVFAHYLRAADLESRDEFVVGSLAGPRPVVLHGFDLAHRSRAEVTVEMGKVNLLGSGSAVVGGRRFTGLGIDVGNPHLACVDTTLTEAELAALDVAAPVDFDPAQFPDGVNVEVLTALRDGAVSMRVHERGVGETRSCGTGTVAAAVAALAQEGAAVGTLDVRIPGGVVTVSVTDTTSFLRGPSELVATGELAGEWWQSHQR.

Residues Asn-11 and Asn-78 each coordinate substrate. Cys-87 functions as the Proton donor in the catalytic mechanism. Substrate contacts are provided by residues 88–89 (GN), Asn-166, Asn-202, and 220–221 (ER). Cys-229 (proton acceptor) is an active-site residue. Substrate is bound at residue 230-231 (GT).

Belongs to the diaminopimelate epimerase family. As to quaternary structure, homodimer.

It is found in the cytoplasm. The catalysed reaction is (2S,6S)-2,6-diaminopimelate = meso-2,6-diaminopimelate. It functions in the pathway amino-acid biosynthesis; L-lysine biosynthesis via DAP pathway; DL-2,6-diaminopimelate from LL-2,6-diaminopimelate: step 1/1. Its function is as follows. Catalyzes the stereoinversion of LL-2,6-diaminopimelate (L,L-DAP) to meso-diaminopimelate (meso-DAP), a precursor of L-lysine and an essential component of the bacterial peptidoglycan. In Mycobacterium sp. (strain JLS), this protein is Diaminopimelate epimerase.